Here is a 480-residue protein sequence, read N- to C-terminus: Sestrin-2 (480 aa).

M1 is subject to N-acetylmethionine. Residues 20-43 (RGGVAGPETREEHREGQARRGSRG) form a disordered region. Residues 27 to 37 (ETREEHREGQA) are compositionally biased toward basic and acidic residues. The segment at 66-239 (GLEALMSSGR…APSPPSEQGT (174 aa)) is N-terminal domain; mediates the alkylhydroperoxide reductase activity. The Cysteine sulfenic acid (-SOH) intermediate role is filled by C125. K175 participates in a covalent cross-link: Glycyl lysine isopeptide (Lys-Gly) (interchain with G-Cter in ubiquitin). Disordered regions lie at residues 221-251 (DAEG…NSGG) and 272-291 (LLRD…ELEK). The segment covering 223-238 (EGSPASQAPSPPSEQG) has biased composition (low complexity). S249 bears the Phosphoserine mark. The C-terminal domain; mediates TORC1 regulation stretch occupies residues 308 to 480 (PHPDILCFVE…ALRAITRYMT (173 aa)). L-leucine-binding positions include 374–377 (TYNT), T386, and E451.

The protein belongs to the sestrin family. In terms of assembly, interacts with the GATOR2 complex which is composed of MIOS, SEC13, SEH1L, WDR24 and WDR59; the interaction is negatively regulated by leucine. Conveys leucine availability via direct interaction with SEH1L and WDR24 components of the GATOR2 complex. Interacts with RRAGA, RRAGB, RRAGC and RRAGD; may function as a guanine nucleotide dissociation inhibitor for RRAGs and regulate them. May interact with the TORC2 complex. Interacts with KEAP1, RBX1, SQSTM and ULK1; to regulate the degradation of KEAP1. May also associate with the complex composed of TSC1, TSC2 and the AMP-responsive protein kinase/AMPK to regulate TORC1 signaling. May interact with PRDX1. In terms of processing, phosphorylated by ULK1 at multiple sites. Ubiquitinated at Lys-175 by RNF167 via 'Lys-63'-linked polyubiquitination in response to leucine deprivation: ubiquitination promotes SESN2-interaction with the GATOR2 complex, leading to inhibit the TORC1 signaling pathway. Deubiquitinated at Lys-175 by STAMBPL1, promoting the TORC1 signaling pathway. Ubiquitinated by RNF186; ubiquitination mediates proteasomal degradation. In terms of tissue distribution, detected in heart, liver and skeletal muscles (at protein level).

It is found in the cytoplasm. It catalyses the reaction a hydroperoxide + L-cysteinyl-[protein] = S-hydroxy-L-cysteinyl-[protein] + an alcohol. Its function is as follows. Functions as an intracellular leucine sensor that negatively regulates the mTORC1 signaling pathway through the GATOR complex. In absence of leucine, binds the GATOR subcomplex GATOR2 and prevents mTORC1 signaling. Binding of leucine to SESN2 disrupts its interaction with GATOR2 thereby activating the TORC1 signaling pathway. This stress-inducible metabolic regulator also plays a role in protection against oxidative and genotoxic stresses. May negatively regulate protein translation in response to endoplasmic reticulum stress, via mTORC1. May positively regulate the transcription by NFE2L2 of genes involved in the response to oxidative stress by facilitating the SQSTM1-mediated autophagic degradation of KEAP1. May also mediate TP53 inhibition of TORC1 signaling upon genotoxic stress. Moreover, may prevent the accumulation of reactive oxygen species (ROS) through the alkylhydroperoxide reductase activity born by the N-terminal domain of the protein. Was originally reported to contribute to oxidative stress resistance by reducing PRDX1. However, this could not be confirmed. The chain is Sestrin-2 from Mus musculus (Mouse).